Here is a 274-residue protein sequence, read N- to C-terminus: Large ribosomal subunit protein uL2 (274 aa).

A disordered region spans residues 224–274; sequence VAMNPVDHPHGGGEGRTSGGRHPVTPWGIPTKGYKTRKNKRSNKLIVQKRK. Basic residues predominate over residues 257 to 274; the sequence is YKTRKNKRSNKLIVQKRK.

It belongs to the universal ribosomal protein uL2 family. In terms of assembly, part of the 50S ribosomal subunit. Forms a bridge to the 30S subunit in the 70S ribosome.

Its function is as follows. One of the primary rRNA binding proteins. Required for association of the 30S and 50S subunits to form the 70S ribosome, for tRNA binding and peptide bond formation. It has been suggested to have peptidyltransferase activity; this is somewhat controversial. Makes several contacts with the 16S rRNA in the 70S ribosome. This is Large ribosomal subunit protein uL2 from Francisella philomiragia subsp. philomiragia (strain ATCC 25017 / CCUG 19701 / FSC 153 / O#319-036).